The chain runs to 413 residues: Serine hydroxymethyltransferase (413 aa).

(6S)-5,6,7,8-tetrahydrofolate contacts are provided by residues Leu-117 and 121–123; that span reads GHL. An N6-(pyridoxal phosphate)lysine modification is found at Lys-226. (6S)-5,6,7,8-tetrahydrofolate is bound by residues Glu-239 and 349 to 351; that span reads SPF.

It belongs to the SHMT family. In terms of assembly, homodimer. Requires pyridoxal 5'-phosphate as cofactor.

It localises to the cytoplasm. It carries out the reaction (6R)-5,10-methylene-5,6,7,8-tetrahydrofolate + glycine + H2O = (6S)-5,6,7,8-tetrahydrofolate + L-serine. It participates in one-carbon metabolism; tetrahydrofolate interconversion. Its pathway is amino-acid biosynthesis; glycine biosynthesis; glycine from L-serine: step 1/1. Its function is as follows. Catalyzes the reversible interconversion of serine and glycine with tetrahydrofolate (THF) serving as the one-carbon carrier. This reaction serves as the major source of one-carbon groups required for the biosynthesis of purines, thymidylate, methionine, and other important biomolecules. Also exhibits THF-independent aldolase activity toward beta-hydroxyamino acids, producing glycine and aldehydes, via a retro-aldol mechanism. The sequence is that of Serine hydroxymethyltransferase from Bacillus cereus (strain G9842).